The following is a 348-amino-acid chain: Protein RecA (348 aa).

71-78 (GVESSGKT) is a binding site for ATP.

The protein belongs to the RecA family.

It is found in the cytoplasm. Functionally, can catalyze the hydrolysis of ATP in the presence of single-stranded DNA, the ATP-dependent uptake of single-stranded DNA by duplex DNA, and the ATP-dependent hybridization of homologous single-stranded DNAs. It interacts with LexA causing its activation and leading to its autocatalytic cleavage. The protein is Protein RecA of Aquifex pyrophilus.